Reading from the N-terminus, the 473-residue chain is Laccase-3 (473 aa).

The N-terminal stretch at 1-21 (MSFSSLRRALVFLGACSSALA) is a signal peptide. 2 consecutive Plastocyanin-like domains span residues 23–148 (IGPV…LVIY) and 160–298 (VDDE…ILRY). N75 is a glycosylation site (N-linked (GlcNAc...) asparagine). Cu cation contacts are provided by H85, H87, H130, and H132. 2 disulfide bridges follow: C106–C462 and C138–C221. N226, N283, N309, N346, N350, and N374 each carry an N-linked (GlcNAc...) asparagine glycan. Residues 365-444 (TVPVLLQILN…AGLAIVFAED (80 aa)) form the Plastocyanin-like 3 domain. Positions 410, 413, 415, 426, 427, 428, and 432 each coordinate Cu cation. N470 carries N-linked (GlcNAc...) asparagine glycosylation.

The protein belongs to the multicopper oxidase family. As to quaternary structure, homodimer. Requires Cu cation as cofactor.

It localises to the secreted. The enzyme catalyses 4 hydroquinone + O2 = 4 benzosemiquinone + 2 H2O. Lignin degradation and detoxification of lignin-derived products. The protein is Laccase-3 (LCC3) of Trametes villosa (White-rot fungus).